Consider the following 1197-residue polypeptide: Probable DNA polymerase (1197 aa).

This sequence belongs to the DNA polymerase type-B family.

The protein localises to the mitochondrion. The enzyme catalyses DNA(n) + a 2'-deoxyribonucleoside 5'-triphosphate = DNA(n+1) + diphosphate. This chain is Probable DNA polymerase, found in Podospora anserina (Pleurage anserina).